The primary structure comprises 476 residues: Aspartyl/glutamyl-tRNA(Asn/Gln) amidotransferase subunit B (476 aa).

It belongs to the GatB/GatE family. GatB subfamily. In terms of assembly, heterotrimer of A, B and C subunits.

The enzyme catalyses L-glutamyl-tRNA(Gln) + L-glutamine + ATP + H2O = L-glutaminyl-tRNA(Gln) + L-glutamate + ADP + phosphate + H(+). The catalysed reaction is L-aspartyl-tRNA(Asn) + L-glutamine + ATP + H2O = L-asparaginyl-tRNA(Asn) + L-glutamate + ADP + phosphate + 2 H(+). In terms of biological role, allows the formation of correctly charged Asn-tRNA(Asn) or Gln-tRNA(Gln) through the transamidation of misacylated Asp-tRNA(Asn) or Glu-tRNA(Gln) in organisms which lack either or both of asparaginyl-tRNA or glutaminyl-tRNA synthetases. The reaction takes place in the presence of glutamine and ATP through an activated phospho-Asp-tRNA(Asn) or phospho-Glu-tRNA(Gln). This Moorella thermoacetica (strain ATCC 39073 / JCM 9320) protein is Aspartyl/glutamyl-tRNA(Asn/Gln) amidotransferase subunit B.